The following is a 456-amino-acid chain: 3-isopropylmalate dehydratase large subunit (456 aa).

Residues Cys336, Cys396, and Cys399 each coordinate [4Fe-4S] cluster.

The protein belongs to the aconitase/IPM isomerase family. LeuC type 1 subfamily. Heterodimer of LeuC and LeuD. [4Fe-4S] cluster serves as cofactor.

It catalyses the reaction (2R,3S)-3-isopropylmalate = (2S)-2-isopropylmalate. The protein operates within amino-acid biosynthesis; L-leucine biosynthesis; L-leucine from 3-methyl-2-oxobutanoate: step 2/4. Functionally, catalyzes the isomerization between 2-isopropylmalate and 3-isopropylmalate, via the formation of 2-isopropylmaleate. This chain is 3-isopropylmalate dehydratase large subunit, found in Staphylococcus epidermidis (strain ATCC 35984 / DSM 28319 / BCRC 17069 / CCUG 31568 / BM 3577 / RP62A).